Here is a 361-residue protein sequence, read N- to C-terminus: Peptide chain release factor 1 (361 aa).

Q238 carries the N5-methylglutamine modification.

The protein belongs to the prokaryotic/mitochondrial release factor family. In terms of processing, methylated by PrmC. Methylation increases the termination efficiency of RF1.

The protein resides in the cytoplasm. In terms of biological role, peptide chain release factor 1 directs the termination of translation in response to the peptide chain termination codons UAG and UAA. This Mesomycoplasma hyopneumoniae (strain 7448) (Mycoplasma hyopneumoniae) protein is Peptide chain release factor 1.